We begin with the raw amino-acid sequence, 349 residues long: METPKTALLGRTLDEIQQIVRNLGMPKFAAKQITSWLYDKKVETIDEMTNLSLKHREALKEGYEVGASAPVEEMRSVDGTVKYLFRTPAHNFIEAVYIPDEDRATLCVSSQVGCKMNCKFCMTGKQGFTANLSAHQILNQIYSIPEREKLTNLVFMGMGEPFDNLDEVLKVLEILTSEYGYGWSPKRITVSSVGLKKGLERFLNESDCHLAISMHTPIPSQRRDLMPAEKAFSITEIIDILHNYDFSKQRRLSFEYIVFKGVNDSLIYAKEIVKLLRGIECRVNLIRFHAIPNVDLEGVDMETMVAFRDYLTQHGVFATIRASRGEDIFAACGMLSTAKQQKEKGVTLQ.

Glu94 serves as the catalytic Proton acceptor. One can recognise a Radical SAM core domain in the interval 100–321; it reads DEDRATLCVS…TQHGVFATIR (222 aa). A disulfide bond links Cys107 and Cys332. Residues Cys114, Cys118, and Cys121 each contribute to the [4Fe-4S] cluster site. Residues 159–160, Ser191, 213–215, and His289 each bind S-adenosyl-L-methionine; these read GE and SMH. The S-methylcysteine intermediate role is filled by Cys332.

The protein belongs to the radical SAM superfamily. RlmN family. Requires [4Fe-4S] cluster as cofactor.

Its subcellular location is the cytoplasm. It catalyses the reaction adenosine(2503) in 23S rRNA + 2 reduced [2Fe-2S]-[ferredoxin] + 2 S-adenosyl-L-methionine = 2-methyladenosine(2503) in 23S rRNA + 5'-deoxyadenosine + L-methionine + 2 oxidized [2Fe-2S]-[ferredoxin] + S-adenosyl-L-homocysteine. The catalysed reaction is adenosine(37) in tRNA + 2 reduced [2Fe-2S]-[ferredoxin] + 2 S-adenosyl-L-methionine = 2-methyladenosine(37) in tRNA + 5'-deoxyadenosine + L-methionine + 2 oxidized [2Fe-2S]-[ferredoxin] + S-adenosyl-L-homocysteine. Functionally, specifically methylates position 2 of adenine 2503 in 23S rRNA and position 2 of adenine 37 in tRNAs. This is Probable dual-specificity RNA methyltransferase RlmN from Phocaeicola vulgatus (strain ATCC 8482 / DSM 1447 / JCM 5826 / CCUG 4940 / NBRC 14291 / NCTC 11154) (Bacteroides vulgatus).